A 173-amino-acid chain; its full sequence is Probable lipoprotein EnvE (173 aa).

Residues 1–20 (MTLLSGKTTLVLCLSSILCG) form the signal peptide. C21 carries N-palmitoyl cysteine lipidation. Residue C21 is the site of S-diacylglycerol cysteine attachment.

Its subcellular location is the cell membrane. The protein is Probable lipoprotein EnvE (envE) of Salmonella typhimurium (strain LT2 / SGSC1412 / ATCC 700720).